The sequence spans 91 residues: uncharacterized protein (91 aa).

This is an uncharacterized protein from Saccharolobus islandicus (Sulfolobus islandicus).